Reading from the N-terminus, the 655-residue chain is Sphingomyelin phosphodiesterase 3 (655 aa).

Residues 1–10 (MVLYTTPFPN) are Cytoplasmic-facing. Residues 11–31 (SCLSALHAVSWALIFPCYWLV) constitute an intramembrane region (helical). At 32–64 (DRLVASFIPTTYEKRQRADDPCYLQLFCTVLFT) the chain is on the cytoplasmic side. 2 S-palmitoyl cysteine lipidation sites follow: cysteine 53 and cysteine 59. The helical intramembrane region spans 65 to 85 (PVYLALLVAALPFAFLGFIFW). Topologically, residues 86 to 655 (SPLQSARRPY…LMVSAGEEEA (570 aa)) are cytoplasmic. The residue at position 178 (serine 178) is a Phosphoserine. Disordered regions lie at residues 209-237 (VEYKGDGGRHPSDEAANGPASGEQADGSL) and 250-320 (GGRA…SNSK). A compositionally biased stretch (basic and acidic residues) spans 211–221 (YKGDGGRHPSD). Residue serine 289 is modified to Phosphoserine. Position 362 (glutamate 362) interacts with Mg(2+). Residues cysteine 395 and cysteine 396 are each lipidated (S-palmitoyl cysteine). The active-site Proton acceptor is histidine 639.

Belongs to the neutral sphingomyelinase family. The cofactor is Mg(2+). In terms of processing, palmitoylated, palmitoylation-deficient proteins are targeted for lysosomal degradation. As to expression, in brain sections, it is restricted to neurons and especially prominent in large cells, including Purkinje cells, pyramidal cells, neurons of the dentate gyrus granular layer, and neurons in the pontine nuclei. Also present in the hypothalamic nuclei, neurons in the piriform cortex, and nuclei of the brainstem (at protein level). Mainly expressed in brain and jejunum. Weakly or not expressed in heart, spleen, lung, liver, kidney and testis.

It is found in the golgi apparatus membrane. The protein localises to the cell membrane. It catalyses the reaction a sphingomyelin + H2O = phosphocholine + an N-acylsphing-4-enine + H(+). It carries out the reaction N-(15Z-tetracosenoyl)sphing-4-enine-1-phosphocholine + H2O = N-(15Z-tetracosenoyl)-sphing-4-enine + phosphocholine + H(+). The enzyme catalyses N-(tetracosanoyl)-sphing-4-enine-1-phosphocholine + H2O = N-tetracosanoyl-sphing-4-enine + phosphocholine + H(+). The catalysed reaction is an N-(acyl)-sphingosylphosphocholine + H2O = an N-acyl-sphingoid base + phosphocholine + H(+). It catalyses the reaction 1-hexadecanoyl-sn-glycero-3-phosphocholine + H2O = 1-hexadecanoyl-sn-glycerol + phosphocholine + H(+). It carries out the reaction 1-O-octadecyl-sn-glycero-3-phosphocholine + H2O = 1-O-octadecyl-sn-glycerol + phosphocholine + H(+). The enzyme catalyses a sphingosylphosphocholine + H2O = a sphingoid base + phosphocholine + H(+). The catalysed reaction is N-(hexadecanoyl)-sphing-4-enine-1-phosphocholine + H2O = N-hexadecanoylsphing-4-enine + phosphocholine + H(+). It functions in the pathway lipid metabolism; sphingolipid metabolism. Inhibited by nSMase inhibitor GW4869. Binding of anionic phospholipids (APLs) such as phosphatidylserine (PS) and phosphatidic acid (PA) increases enzymatic activity. Its function is as follows. Catalyzes the hydrolysis of sphingomyelin to form ceramide and phosphocholine. Ceramide mediates numerous cellular functions, such as apoptosis and growth arrest, and is capable of regulating these 2 cellular events independently. Also hydrolyzes sphingosylphosphocholine. Binds to anionic phospholipids (APLs) such as phosphatidylserine (PS) and phosphatidic acid (PA) that modulate enzymatic activity and subcellular location. Regulates the cell cycle by acting as a growth suppressor in confluent cells. Acts as a regulator of postnatal development and participates in bone and dentin mineralization. May be involved in IL-1-beta-induced JNK activation in hepatocytes. May act as a mediator in transcriptional regulation of NOS2/iNOS via the NF-kappa-B activation under inflammatory conditions. This is Sphingomyelin phosphodiesterase 3 from Rattus norvegicus (Rat).